We begin with the raw amino-acid sequence, 1531 residues long: MPSDFISLLSADLDLESPKSLYSRESVYDLLPKELQLPPSRETSVASMSQTSGGEAGSPPPAVVAADASSAPSSSSMGGACSSFTTSSSPTIYSTSVTDSKAMQVESCSSAVGVSNRGVSEKQLTSNTVQQHPSTPKRHTVLYISPPPEDLLDNSRMSCQDEGCGLESEQSCSMWMEDSPSNFSNMSTSSYNDNTEVPRKSRKRNPKQRPGVKRRDCEESNMDIFDADSAKAPHYVLSQLTTDNKGNSKAGNGTLENQKGTGVKKSPMLCGQYPVKSEGKELKIVVQPETQHRARYLTEGSRGSVKDRTQQGFPTVKLEGHNEPVVLQVFVGNDSGRVKPHGFYQACRVTGRNTTPCKEVDIEGTTVIEVGLDPSNNMTLAVDCVGILKLRNADVEARIGIAGSKKKSTRARLVFRVNIMRKDGSTLTLQTPSSPILCTQPAGVPEILKKSLHSCSVKGEEEVFLIGKNFLKGTKVIFQENVSDENSWKSEAEIDMELFHQNHLIVKVPPYHDQHITLPVSVGIYVVTNAGRSHDVQPFTYTPDPAAAGALNVNVKKEISSPARPCSFEEAMKAMKTTGCNLDKVNIIPNALMTPLIPSSMIKSEDVTPMEVTAEKRSSTIFKTTKSVGSTQQTLENISNIAGNGSFSSPSSSHLPSENEKQQQIQPKAYNPETLTTIQTQDISQPGTFPAVSASSQLPNSDALLQQATQFQTRETQSREILQSDGTVVNLSQLTEASQQQQQSPLQEQAQTLQQQISSNIFPSPNSVSQLQNTIQQLQAGSFTGSTASGSSGSVDLVQQVLEAQQQLSSVLFSAPDGNENVQEQLSADIFQQVSQIQSGVSPGMFSSTEPTVHTRPDNLLPGRAESVHPQSENTLSNQQQQQQQQQQVMESSAAMVMEMQQSICQAAAQIQSELFPSTASANGNLQQSPVYQQTSHMMSALSTNEDMQMQCELFSSPPAVSGNETSTTTTQQVATPGTTMFQTSSSGDGEETGTQAKQIQNSVFQTMVQMQHSGDNQPQVNLFSSTKSMMSVQNSGTQQQGNGLFQQGNEMMSLQSGNFLQQSSHSQAQLFHPQNPIADAQNLSQETQGSLFHSPNPIVHSQTSTTSSEQMQPPMFHSQSTIAVLQGSSVPQDQQSTNIFLSQSPMNNLQTNTVAQEAFFAAPNSISPLQSTSNSEQQAAFQQQAPISHIQTPMLSQEQAQPPQQGLFQPQVALGSLPPNPMPQSQQGTMFQSQHSIVAMQSNSPSQEQQQQQQQQQQQQQQQQQSILFSNQNTMATMASPKQPPPNMIFNPNQNPMANQEQQNQSIFHQQSNMAPMNQEQQPMQFQSQSTVSSLQNPGPTQSESSQTPLFHSSPQIQLVQGSPSSQEQQVTLFLSPASMSALQTSINQQDMQQSPLYSPQNNMPGIQGATSSPQPQATLFHNTAGGTMNQLQNSPGSSQQTSGMFLFGIQNNCSQLLTSGPATLPDQLMAISQPGQPQNEGQPPVTTLLSQQMPENSPLASSINTNQNIEKIDLLVSLQNQGNNLTGSF.

2 disordered regions span residues 34–89 (ELQL…TSSS) and 114–141 (VSNRGVSEKQLTSNTVQQHPSTPKRHTV). Residues 41 to 51 (RETSVASMSQT) show a composition bias toward polar residues. Residues 63-89 (VVAADASSAPSSSSMGGACSSFTTSSS) show a composition bias toward low complexity. Ser120 is subject to Phosphoserine. Lys122 carries the post-translational modification N6-acetyllysine. Positions 122–134 (KQLTSNTVQQHPS) are enriched in polar residues. The residue at position 134 (Ser134) is a Phosphoserine. Thr135 is subject to Phosphothreonine; by CDK5. Ser155 is modified (phosphoserine). Disordered regions lie at residues 175–220 (WMED…CEES) and 241–265 (TTDNKGNSKAGNGTLENQKGTGVKK). Low complexity predominate over residues 179 to 192 (SPSNFSNMSTSSYN). The segment covering 200–212 (KSRKRNPKQRPGV) has biased composition (basic residues). The span at 241-260 (TTDNKGNSKAGNGTLENQKG) shows a compositional bias: polar residues. Positions 264-443 (KKSPMLCGQY…SPILCTQPAG (180 aa)) constitute an RHD domain. A DNA-binding region spans residues 293-300 (RARYLTEG). A Glycyl lysine isopeptide (Lys-Gly) (interchain with G-Cter in SUMO1); alternate cross-link involves residue Lys556. Lys556 participates in a covalent cross-link: Glycyl lysine isopeptide (Lys-Gly) (interchain with G-Cter in SUMO2); alternate. A Phosphoserine modification is found at Ser561. Glycyl lysine isopeptide (Lys-Gly) (interchain with G-Cter in SUMO2) cross-links involve residues Lys573 and Lys603. Disordered regions lie at residues 640–666 (NIAGNGSFSSPSSSHLPSENEKQQQIQ), 841–891 (VSPG…QVME), 958–996 (PPAVSGNETSTTTTQQVATPGTTMFQTSSSGDGEETGTQ), 1211–1304 (PQVA…QEQQ), 1316–1371 (APMN…QEQQ), and 1473–1502 (ISQPGQPQNEGQPPVTTLLSQQMPENSPLA). Residues 646–656 (SFSSPSSSHLP) show a composition bias toward low complexity. Polar residues-rich tracts occupy residues 841–852 (VSPGMFSSTEPT) and 869–878 (HPQSENTLSN). 2 stretches are compositionally biased toward low complexity: residues 879 to 888 (QQQQQQQQQQ) and 960 to 980 (AVSGNETSTTTTQQVATPGTT). 2 stretches are compositionally biased toward polar residues: residues 981–996 (MFQTSSSGDGEETGTQ) and 1224–1247 (PQSQQGTMFQSQHSIVAMQSNSPS). Positions 1248-1266 (QEQQQQQQQQQQQQQQQQQ) are enriched in low complexity. Composition is skewed to polar residues over residues 1267-1278 (SILFSNQNTMAT) and 1291-1304 (FNPNQNPMANQEQQ). The span at 1320–1330 (QEQQPMQFQSQ) shows a compositional bias: low complexity. A compositionally biased stretch (polar residues) spans 1331–1371 (STVSSLQNPGPTQSESSQTPLFHSSPQIQLVQGSPSSQEQQ). Residues 1475-1486 (QPGQPQNEGQPP) show a composition bias toward low complexity. A compositionally biased stretch (polar residues) spans 1487–1502 (VTTLLSQQMPENSPLA).

As to quaternary structure, homodimer when bound to DNA, completely encircles its DNA target. Interacts with CIDEC; this interaction is direct and retains NFAT5 in the cytoplasm. Does not bind with Fos and Jun transcription factors. Interacts with DDX5 and DDX17; this interaction leads to DDX5/DDX17 recruitment to LNC2 and S100A4 promoters and NFAT5-mediated DDX5/DDX17-enhanced transactivation. Post-translationally, phosphorylated. Phosphorylated at Thr-135 by CDK5 in response to osmotic stress; this phosphorylation mediates its rapid nuclear localization. In terms of processing, poly-ADP-ribosylated by PARP1 in response to DNA damage, promoting recruitment to sites of R-loop-associated DNA damage. Widely expressed, with highest levels in skeletal muscle, brain, heart and peripheral blood leukocytes.

It is found in the nucleus. Its subcellular location is the cytoplasm. The protein resides in the chromosome. Functionally, transcription factor involved, among others, in the transcriptional regulation of osmoprotective and inflammatory genes. Binds the DNA consensus sequence 5'-[ACT][AG]TGGAAA[CAT]A[TA][ATC][CA][ATG][GT][GAC][CG][CT]-3'. Mediates the transcriptional response to hypertonicity. Positively regulates the transcription of LCN2 and S100A4 genes; optimal transactivation of these genes requires the presence of DDX5/DDX17. Also involved in the DNA damage response by preventing formation of R-loops; R-loops are composed of a DNA:RNA hybrid and the associated non-template single-stranded DNA. This is Nuclear factor of activated T-cells 5 from Homo sapiens (Human).